A 355-amino-acid polypeptide reads, in one-letter code: Erythronate-4-phosphate dehydrogenase (355 aa).

Positions 45 and 66 each coordinate substrate. D146 contacts NAD(+). R206 is a catalytic residue. D229 serves as a coordination point for NAD(+). Residue E234 is part of the active site. The active-site Proton donor is H251. NAD(+) is bound at residue G254. Y255 is a substrate binding site.

Belongs to the D-isomer specific 2-hydroxyacid dehydrogenase family. PdxB subfamily. As to quaternary structure, homodimer.

The protein localises to the cytoplasm. The enzyme catalyses 4-phospho-D-erythronate + NAD(+) = (R)-3-hydroxy-2-oxo-4-phosphooxybutanoate + NADH + H(+). It participates in cofactor biosynthesis; pyridoxine 5'-phosphate biosynthesis; pyridoxine 5'-phosphate from D-erythrose 4-phosphate: step 2/5. Functionally, catalyzes the oxidation of erythronate-4-phosphate to 3-hydroxy-2-oxo-4-phosphonooxybutanoate. The polypeptide is Erythronate-4-phosphate dehydrogenase (Acinetobacter baumannii (strain SDF)).